A 284-amino-acid chain; its full sequence is 4-hydroxybenzoate octaprenyltransferase (284 aa).

9 helical membrane-spanning segments follow: residues 19–39 (IGTL…AKGM), 42–62 (FDVL…GCVI), 93–113 (IVLF…MNPL), 114–134 (TIKL…MKRF), 136–156 (HLPQ…AWAA), 161–181 (LPSI…AYDT), 209–229 (LMVG…GMHY), 235–252 (FYWA…QQHL), and 264–284 (AFLN…ITFW).

It belongs to the UbiA prenyltransferase family. Requires Mg(2+) as cofactor.

The protein localises to the cell inner membrane. The enzyme catalyses all-trans-octaprenyl diphosphate + 4-hydroxybenzoate = 4-hydroxy-3-(all-trans-octaprenyl)benzoate + diphosphate. The protein operates within cofactor biosynthesis; ubiquinone biosynthesis. In terms of biological role, catalyzes the prenylation of para-hydroxybenzoate (PHB) with an all-trans polyprenyl group. Mediates the second step in the final reaction sequence of ubiquinone-8 (UQ-8) biosynthesis, which is the condensation of the polyisoprenoid side chain with PHB, generating the first membrane-bound Q intermediate 3-octaprenyl-4-hydroxybenzoate. This Vibrio atlanticus (strain LGP32) (Vibrio splendidus (strain Mel32)) protein is 4-hydroxybenzoate octaprenyltransferase.